A 417-amino-acid polypeptide reads, in one-letter code: Queuine tRNA-ribosyltransferase accessory subunit 2 (417 aa).

Cys324, Cys326, Cys329, and His355 together coordinate Zn(2+).

It belongs to the queuine tRNA-ribosyltransferase family. QTRT2 subfamily. Heterodimer of a catalytic subunit and an accessory subunit. Zn(2+) serves as cofactor.

It localises to the cytoplasm. Its function is as follows. Non-catalytic subunit of the queuine tRNA-ribosyltransferase (TGT) that catalyzes the base-exchange of a guanine (G) residue with queuine (Q) at position 34 (anticodon wobble position) in tRNAs with GU(N) anticodons (tRNA-Asp, -Asn, -His and -Tyr), resulting in the hypermodified nucleoside queuosine (7-(((4,5-cis-dihydroxy-2-cyclopenten-1-yl)amino)methyl)-7-deazaguanosine). This is Queuine tRNA-ribosyltransferase accessory subunit 2 from Drosophila pseudoobscura pseudoobscura (Fruit fly).